The sequence spans 259 residues: MMQKQNMIVVNQKEIAKNIYELVLQGDLVQQMNDPGQFVHIKVAEGITPLLRRPISICNVDQDKNEFTMLYRAEGQGTKTLAKRKQGELVDVLGPLGHGFPVEEAESGQTALLVGGGIGVPPLYELSQRLVAKGVRVIHILGFQTKDVVFYEEKFAELGDTYVATVDGTHGTKGFVTDVIDSYGIDFDILYSCGPLAMLRALEGRYKERKAYISLEERMGCGIGACFACVCHLQADPSGHSYKKVCSDGPVFPIGEVVL.

The 101-residue stretch at 2–102 folds into the FAD-binding FR-type domain; sequence MQKQNMIVVN…LGPLGHGFPV (101 aa). Residues 53–56, 70–72, and 77–78 each bind FAD; these read RPIS, LYR, and GT. C221, C226, C229, and C246 together coordinate [2Fe-2S] cluster.

This sequence belongs to the PyrK family. Heterotetramer of 2 PyrK and 2 PyrD type B subunits. [2Fe-2S] cluster serves as cofactor. The cofactor is FAD.

Its pathway is pyrimidine metabolism; UMP biosynthesis via de novo pathway; orotate from (S)-dihydroorotate (NAD(+) route): step 1/1. Functionally, responsible for channeling the electrons from the oxidation of dihydroorotate from the FMN redox center in the PyrD type B subunit to the ultimate electron acceptor NAD(+). The chain is Dihydroorotate dehydrogenase B (NAD(+)), electron transfer subunit from Bacillus mycoides (strain KBAB4) (Bacillus weihenstephanensis).